Here is a 382-residue protein sequence, read N- to C-terminus: Pyrimidine monooxygenase RutA (382 aa).

Residues 68-69, N134, E143, 159-160, and S209 contribute to the FMN site; these read IK and RY.

The protein belongs to the NtaA/SnaA/DszA monooxygenase family. RutA subfamily.

The enzyme catalyses uracil + FMNH2 + NADH + O2 = (Z)-3-ureidoacrylate + FMN + NAD(+) + H2O + H(+). It catalyses the reaction thymine + FMNH2 + NADH + O2 = (Z)-2-methylureidoacrylate + FMN + NAD(+) + H2O + H(+). In terms of biological role, catalyzes the pyrimidine ring opening between N-3 and C-4 by an unusual flavin hydroperoxide-catalyzed mechanism, adding oxygen atoms in the process to yield ureidoacrylate peracid, that immediately reacts with FMN forming ureidoacrylate and FMN-N(5)-oxide. The FMN-N(5)-oxide reacts spontaneously with NADH to produce FMN. Requires the flavin reductase RutF to regenerate FMN in vivo. The chain is Pyrimidine monooxygenase RutA from Escherichia coli O8 (strain IAI1).